A 282-amino-acid chain; its full sequence is Endo-1,4-beta-xylanase B (282 aa).

The first 39 residues, 1 to 39 (MGISSILLSALIAGGALALPAAEPVSFDIRDENITLARR), serve as a signal peptide directing secretion. N-linked (GlcNAc...) asparagine glycosylation occurs at Asn-33. In terms of domain architecture, GH11 spans 40–219 (AEAINYNQDY…GSGSGQISLS (180 aa)). The active-site Nucleophile is the Glu-117. Glu-206 functions as the Proton donor in the catalytic mechanism. The interval 214-245 (GQISLSKGTGGGSTTTTPTGPTSTSTAPSSGG) is disordered. Residues 227–243 (TTTTPTGPTSTSTAPSS) show a composition bias toward low complexity. The 37-residue stretch at 246 to 282 (TGAAQWGQCGGIGWTGPTTCVAPYTCKYENAYYSQCQ) folds into the CBM1 domain.

This sequence belongs to the glycosyl hydrolase 11 (cellulase G) family.

The protein resides in the secreted. The catalysed reaction is Endohydrolysis of (1-&gt;4)-beta-D-xylosidic linkages in xylans.. The protein operates within glycan degradation; xylan degradation. Its activity is regulated as follows. Significantly inhibited by the wheat xylanase inhibiting protein I (XIP-I) and the proteinaceous endoxylanase Triticum aestivum xylanase inhibitors I (TAXI-I), but not TAXI-II. In terms of biological role, endo-1,4-beta-xylanase involved in the hydrolysis of xylan, a major structural heterogeneous polysaccharide found in plant biomass representing the second most abundant polysaccharide in the biosphere, after cellulose. The chain is Endo-1,4-beta-xylanase B (xynB) from Talaromyces funiculosus (Fruitlet core rot fungus).